A 365-amino-acid chain; its full sequence is N-acetylgalactosamine-N,N'-diacetylbacillosaminyl-diphospho-undecaprenol 4-alpha-N-acetylgalactosaminyltransferase (365 aa).

The protein belongs to the glycosyltransferase group 1 family.

The protein resides in the cell inner membrane. It carries out the reaction N-acetyl-alpha-D-galactosaminyl-(1-&gt;3)-N,N'-diacetyl-alpha-D-bacillosaminyl-tri-trans,hepta-cis-undecaprenyl diphosphate + UDP-N-acetyl-alpha-D-galactosamine = N-acetyl-alpha-D-galactosaminyl-(1-&gt;4)-N-acetyl-alpha-D-galactosaminyl-(1-&gt;3)-N,N'-diacetyl-alpha-D-bacillosaminyl-tri-trans,heptacis-undecaprenyl diphosphate + UDP + H(+). The protein operates within protein modification; protein glycosylation. In terms of biological role, adds a GalNAc residue on to the Und-PP-Bac2,4diNAc-GalNAc disaccharide in the N-linked protein glycosylation pathway. Transfers the third sugar in the heptasaccharide biosynthesis. This is N-acetylgalactosamine-N,N'-diacetylbacillosaminyl-diphospho-undecaprenol 4-alpha-N-acetylgalactosaminyltransferase (pglJ) from Campylobacter jejuni subsp. jejuni serotype O:2 (strain ATCC 700819 / NCTC 11168).